Reading from the N-terminus, the 611-residue chain is O-fucosyltransferase 8 (611 aa).

Residues 1–29 (MGKQGSPRSPRPETIDKEEKFGRRSLDSL) form a disordered region. Over residues 10–26 (PRPETIDKEEKFGRRSL) the composition is skewed to basic and acidic residues. Residues 78-98 (IVLMISVTGFIFCMDSIMVSI) traverse the membrane as a helical; Signal-anchor for type II membrane protein segment. Residues Asn-115, Asn-216, and Asn-270 are each glycosylated (N-linked (GlcNAc...) asparagine). 386 to 388 (HLR) is a binding site for substrate. Asn-506 carries an N-linked (GlcNAc...) asparagine glycan.

It belongs to the glycosyltransferase GT106 family.

The protein localises to the membrane. It participates in glycan metabolism. The chain is O-fucosyltransferase 8 from Arabidopsis thaliana (Mouse-ear cress).